Reading from the N-terminus, the 1080-residue chain is Histone deacetylase 4 (1080 aa).

Disordered regions lie at residues 1–25 (MSSQ…PPRV), 132–165 (KLEQ…ESAV), and 205–312 (TQHS…ISAE). Basic and acidic residues predominate over residues 132–162 (KLEQHRQEQELEKQHREQKLQQLKNKEKGKE). The segment covering 205–224 (TQHSSLDQSSPPQSGVSGTY) has biased composition (polar residues). Basic and acidic residues-rich tracts occupy residues 233-244 (DSKDDFPLRKTA) and 258-273 (KVAE…RKDG). Residues 289–312 (SACNSAPGSGPSSPNNSSNNISAE) show a composition bias toward low complexity. Positions 348–353 (PSLPNI) match the PxLPxI/L motif. Disordered regions lie at residues 506–527 (KPNE…ELRE), 558–579 (EPIE…GQRQ), and 622–646 (PLSR…PTKP). The segment covering 509–527 (EPARQHESHPEETEEELRE) has biased composition (basic and acidic residues). Residues 560-571 (IESDEEEAEPQQ) show a composition bias toward acidic residues. The segment covering 625–637 (RAQSSPASATFPM) has biased composition (polar residues). The segment at 651–1080 (GLVYDTLMLK…DEPMEEEPPL (430 aa)) is histone deacetylase. Positions 663, 665, 671, and 747 each coordinate Zn(2+). H799 is a catalytic residue. The disordered stretch occupies residues 1055 to 1080 (MASLSVGVKPAEKRPDDEPMEEEPPL).

This sequence belongs to the histone deacetylase family. HD type 2 subfamily.

The protein resides in the nucleus. It carries out the reaction N(6)-acetyl-L-lysyl-[histone] + H2O = L-lysyl-[histone] + acetate. Responsible for the deacetylation of lysine residues on the N-terminal part of the core histones (H2A, H2B, H3 and H4). Histone deacetylation gives a tag for epigenetic repression and plays an important role in transcriptional regulation, cell cycle progression and developmental events. Histone deacetylases act via the formation of large multiprotein complexes. This Gallus gallus (Chicken) protein is Histone deacetylase 4 (HDAC4).